The chain runs to 499 residues: Long chain base biosynthesis protein 2b (499 aa).

The chain crosses the membrane as a helical span at residues 5-25 (VPYVTAATTLFSFGLIFGFGH). Position 322 is an N6-(pyridoxal phosphate)lysine (Lys-322).

This sequence belongs to the class-II pyridoxal-phosphate-dependent aminotransferase family. In terms of assembly, heterodimer with LCB1. Component of the serine palmitoyltransferase (SPT) complex, composed of LCB1 and LCB2. Requires pyridoxal 5'-phosphate as cofactor.

It is found in the endoplasmic reticulum membrane. The enzyme catalyses L-serine + hexadecanoyl-CoA + H(+) = 3-oxosphinganine + CO2 + CoA. Its pathway is lipid metabolism; sphingolipid metabolism. Functionally, serine palmitoyltransferase (SPT). The heterodimer formed with LCB1 constitutes the catalytic core. This is Long chain base biosynthesis protein 2b from Oryza sativa subsp. japonica (Rice).